Here is a 228-residue protein sequence, read N- to C-terminus: Upstream activation factor subunit UAF30 (228 aa).

The 56-residue stretch at 1–56 folds into the DEK-C domain; the sequence is MAELNDYSTMIDILLSDMDLETVTTKKVRMALKEVYAIDVESQGKAINKLIRKHLD. Basic and acidic residues predominate over residues 89 to 111; that stretch reads SKRSSGEEKNDSETKGTHVEKKK. Positions 89 to 118 are disordered; that stretch reads SKRSSGEEKNDSETKGTHVEKKKGTVSKSP. Positions 119 to 195 constitute an SWIB/MDM2 domain; that stretch reads ISTRKVTLSK…HKILASHMTE (77 aa). The segment at 209-228 is disordered; it reads VRRKEKPIVSDSEQSDTKGI. A phosphoserine mark is found at Ser218, Ser220, and Ser223.

As to quaternary structure, component of the UAF (upstream activation factor) complex which consists of UAF30, RRN5, RRN9, RRN10, and histones H3 and H4.

It localises to the nucleus. Its subcellular location is the nucleolus. Nonessential component of the UAF (upstream activation factor) complex which interacts with the upstream element of the RNA polymerase I promoter and forms a stable preinitiation complex. Together with SPT15/TBP UAF seems to stimulate basal transcription to a fully activated level. UAF30 seems to play a role in silencing transcription by RNA polymerase II. The chain is Upstream activation factor subunit UAF30 (UAF30) from Saccharomyces cerevisiae (strain ATCC 204508 / S288c) (Baker's yeast).